An 87-amino-acid polypeptide reads, in one-letter code: Small ribosomal subunit protein uS17 (87 aa).

It belongs to the universal ribosomal protein uS17 family. As to quaternary structure, part of the 30S ribosomal subunit.

In terms of biological role, one of the primary rRNA binding proteins, it binds specifically to the 5'-end of 16S ribosomal RNA. This Listeria innocua serovar 6a (strain ATCC BAA-680 / CLIP 11262) protein is Small ribosomal subunit protein uS17.